The sequence spans 229 residues: Cytochrome c oxidase subunit 2 (229 aa).

Residues 1 to 26 (MSTWANLGLQDSASPLMEQLIFFHDH) lie on the Mitochondrial intermembrane side of the membrane. The chain crosses the membrane as a helical span at residues 27 to 48 (ALLILVMITVLVGYLMFMLFFN). Residues 49 to 62 (SYVNRFLLHGQLIE) lie on the Mitochondrial matrix side of the membrane. Residues 63-82 (MIWTILPAIILLFIAMPSLR) form a helical membrane-spanning segment. Topologically, residues 83–229 (LLYLLDEINE…IKWISNSVNS (147 aa)) are mitochondrial intermembrane. Residues histidine 161, cysteine 196, glutamate 198, cysteine 200, histidine 204, and methionine 207 each contribute to the Cu cation site. Glutamate 198 is a binding site for Mg(2+).

This sequence belongs to the cytochrome c oxidase subunit 2 family. Component of the cytochrome c oxidase (complex IV, CIV), a multisubunit enzyme composed of a catalytic core of 3 subunits and several supernumerary subunits. The complex exists as a monomer or a dimer and forms supercomplexes (SCs) in the inner mitochondrial membrane with ubiquinol-cytochrome c oxidoreductase (cytochrome b-c1 complex, complex III, CIII). Cu cation is required as a cofactor.

It localises to the mitochondrion inner membrane. The enzyme catalyses 4 Fe(II)-[cytochrome c] + O2 + 8 H(+)(in) = 4 Fe(III)-[cytochrome c] + 2 H2O + 4 H(+)(out). Functionally, component of the cytochrome c oxidase, the last enzyme in the mitochondrial electron transport chain which drives oxidative phosphorylation. The respiratory chain contains 3 multisubunit complexes succinate dehydrogenase (complex II, CII), ubiquinol-cytochrome c oxidoreductase (cytochrome b-c1 complex, complex III, CIII) and cytochrome c oxidase (complex IV, CIV), that cooperate to transfer electrons derived from NADH and succinate to molecular oxygen, creating an electrochemical gradient over the inner membrane that drives transmembrane transport and the ATP synthase. Cytochrome c oxidase is the component of the respiratory chain that catalyzes the reduction of oxygen to water. Electrons originating from reduced cytochrome c in the intermembrane space (IMS) are transferred via the dinuclear copper A center (CU(A)) of subunit 2 and heme A of subunit 1 to the active site in subunit 1, a binuclear center (BNC) formed by heme A3 and copper B (CU(B)). The BNC reduces molecular oxygen to 2 water molecules using 4 electrons from cytochrome c in the IMS and 4 protons from the mitochondrial matrix. The sequence is that of Cytochrome c oxidase subunit 2 (mt:CoII) from Drosophila ambigua (Fruit fly).